Here is a 331-residue protein sequence, read N- to C-terminus: Osmotic avoidance abnormal protein 8 (331 aa).

An N-terminal signal peptide occupies residues 1–21 (MPAKMLKWLLIHIFLIHSIFC).

As to expression, expressed in the hypodermal syncitium but not in hypodermal seam cells.

It localises to the secreted. Negative regulator of the osmotic stress response. Acts via the transmembrane protein ptr-23. The chain is Osmotic avoidance abnormal protein 8 (osm-8) from Caenorhabditis elegans.